The chain runs to 64 residues: Large ribosomal subunit protein bL32 (64 aa).

The disordered stretch occupies residues 1-36 (MAVQKSRVTPSRRGQRRSHDALSAKQLSTDPTTGEV).

This sequence belongs to the bacterial ribosomal protein bL32 family.

The protein is Large ribosomal subunit protein bL32 of Stenotrophomonas maltophilia (strain K279a).